We begin with the raw amino-acid sequence, 362 residues long: G-prodeshotein coupled receptor 4 (362 aa).

Topologically, residues 1–8 are extracellular; sequence MGNHTWEG. The N-linked (GlcNAc...) asparagine glycan is linked to Asn-3. The chain crosses the membrane as a helical span at residues 9–45; that stretch reads CHVDSRVDHLFPPSLYIFVIGVGLPTNCLALWAAYRQ. 2 disulfide bridges follow: Cys-9-Cys-258 and Cys-90-Cys-168. Topologically, residues 46 to 49 are cytoplasmic; that stretch reads VQQR. A helical transmembrane segment spans residues 50-80; sequence NELGVYLMNLSIADLLYICTLPLWVDYFLHH. The Extracellular portion of the chain corresponds to 81–85; the sequence is DNWIH. A helical transmembrane segment spans residues 86–121; it reads GPGSCKLFGFIFYTNIYISIAFLCCISVDRYLAVAH. Topologically, residues 122-129 are cytoplasmic; the sequence is PLRFARLR. Residues 130-156 traverse the membrane as a helical segment; it reads RVKTAVAVSSVVWATELGANSAPLFHD. Residues 157 to 172 lie on the Extracellular side of the membrane; that stretch reads ELFRDRYNHTFCFEKF. The tract at residues 157 to 172 is extracellular loop 2 (ECL2); the sequence is ELFRDRYNHTFCFEKF. Asn-164 is a glycosylation site (N-linked (GlcNAc...) asparagine). Residues 173 to 210 traverse the membrane as a helical segment; the sequence is PMEGWVAWMNLYRVFVGFLFPWALMLLSYRGILRAVRG. The Cytoplasmic portion of the chain corresponds to 211–214; that stretch reads SVST. Residues 215-250 form a helical membrane-spanning segment; sequence ERQEKAKIKRLALSLIAIVLVCFAPYHVLLLSRSAI. Topologically, residues 251–260 are extracellular; it reads YLGRPWDCGF. The helical transmembrane segment at 261-289 threads the bilayer; it reads EERVFSAYHSSLAFTSLNCVADPILYCLV. At 290–362 the chain is on the cytoplasmic side; sequence NEGARSDVAK…VQLKMLPPAQ (73 aa). Positions 335 to 362 are disordered; it reads AKAMTGSWAATPPSQGDQVQLKMLPPAQ.

The protein belongs to the G-protein coupled receptor 1 family.

It localises to the cell membrane. Activated by a network of residues that connects an extracellular-facing cavity to Glu-145, a conserved charged residue buried in the transmembrane core of the receptor. Protonation likely drives conformational changes in extracellular loop 2 (ECL2), which stabilizes movement of transmembrane 3 (TM3) and a series of rearrangements that connect the extracellular-facing cavity to Glu-145, a residue only conserved in proton-sensing G-protein coupled receptors. Its function is as follows. Proton-sensing G-protein coupled receptor activated by extracellular pH, which is required to monitor pH changes and generate adaptive reactions. Activated by an optimal pH of 6.8-7.2. Ligand binding causes a conformation change that triggers signaling via guanine nucleotide-binding proteins (G proteins) and modulates the activity of downstream effectors, such as adenylate cyclase. GPR4 is mainly coupled to G(s) G proteins and mediates activation of adenylate cyclase activity. May also couple with G(q) and G(12)/G(13) G proteins. Acts as a key regulator of respiratory sensitivity to CO2/H(+) in brain retrotrapezoid nucleus neurons: acts by mediating detection of protons generated by the formation of carbonic acid in the blood, an important mechanism to impulse to breathe. Also acts as a regulator of acid secretion in the kidney collecting duct by maintaining acid-base homeostasis in the kidney. Acidosis-induced GPR4 activation increases paracellular gap formation and permeability of vascular endothelial cells, possibly through the G(12)/G(13)/Rho GTPase signaling pathway. This Homo sapiens (Human) protein is G-prodeshotein coupled receptor 4.